Consider the following 179-residue polypeptide: MAATEPILAATGSPAAVPPEKPEGAGSSSDPECNCVGSSLPEASPPAPEPSSLNVAVPEAIPTPQAAASAAPELPLGPAPVSVAPQAEAEARSTPGPAGSRLGPETFRQRFRQFRYQDAAGPREAFRQLRELSRQWLRPDIRTKEQIVEMLVQEQLLAILPEAARARRIRRRTDVRITG.

The interval 1–108 is disordered; sequence MAATEPILAA…GSRLGPETFR (108 aa). Residues 60–80 show a composition bias toward low complexity; it reads AIPTPQAAASAAPELPLGPAP. Residues 108 to 166 form the SCAN box domain; the sequence is RQRFRQFRYQDAAGPREAFRQLRELSRQWLRPDIRTKEQIVEMLVQEQLLAILPEAARA.

As to quaternary structure, interacts with ZNF202.

It is found in the nucleus. In terms of biological role, may regulate transcriptional activity. The protein is SCAN domain-containing protein 1 (SCAND1) of Pongo pygmaeus (Bornean orangutan).